The following is a 551-amino-acid chain: Probable metalloreductase AIM14 (551 aa).

Helical transmembrane passes span 25-45 (GIII…VKFI), 67-87 (PTWM…GANI), 100-117 (RYGR…YLIL), 138-155 (KWLS…AIGY), 172-192 (FLNF…IVSI), 199-221 (YYSL…IIFH), and 225-247 (GVTI…LRFY). Residues 102-217 (GRIAYCLLPL…NITAWSMVVL (116 aa)) enclose the Ferric oxidoreductase domain. The FAD-binding FR-type domain occupies 247–369 (YKSYPVNNLK…GGSGISFGLP (123 aa)). The segment at 440 to 492 (QDESHAKVEQTQGEEEVDGLLNQDENGIPLQSMKKESFPKKEEGEDEEKSSKD) is disordered. Positions 472–492 (MKKESFPKKEEGEDEEKSSKD) are enriched in basic and acidic residues.

Belongs to the ferric reductase (FRE) family. AIM14 subfamily.

It localises to the membrane. In terms of biological role, probable cell surface metalloreductase. May be involved in iron or copper homeostasis. In Candida tropicalis (strain ATCC MYA-3404 / T1) (Yeast), this protein is Probable metalloreductase AIM14 (AIM14).